Consider the following 220-residue polypeptide: Imidazoleglycerol-phosphate dehydratase (220 aa).

Substrate contacts are provided by residues E14, 64–72 (HMIHALAKH), 90–94 (HHTTE), R116, and R138. H64, H90, H91, and E94 together coordinate Mn(2+). Positions 162, 186, 187, and 190 each coordinate Mn(2+). Residues 186–194 (HHRSESAFK) and 214–216 (STK) contribute to the substrate site.

The protein belongs to the imidazoleglycerol-phosphate dehydratase family. The cofactor is Mn(2+).

It carries out the reaction D-erythro-1-(imidazol-4-yl)glycerol 3-phosphate = 3-(imidazol-4-yl)-2-oxopropyl phosphate + H2O. The protein operates within amino-acid biosynthesis; L-histidine biosynthesis; L-histidine from 5-phospho-alpha-D-ribose 1-diphosphate: step 6/9. The polypeptide is Imidazoleglycerol-phosphate dehydratase (Saccharomyces cerevisiae (strain ATCC 204508 / S288c) (Baker's yeast)).